Reading from the N-terminus, the 816-residue chain is Pentatricopeptide repeat-containing protein At5g12100, mitochondrial (816 aa).

The transit peptide at methionine 1–glutamate 39 directs the protein to the mitochondrion. The segment at alanine 34–glutamate 57 is disordered. PPR repeat units lie at residues histidine 108–proline 142, serine 143–proline 177, serine 178–proline 212, serine 213–proline 247, serine 248–proline 282, serine 283–proline 317, aspartate 318–methionine 352, asparagine 353–proline 387, asparagine 388–proline 422, aspartate 423–proline 457, serine 458–proline 492, asparagine 493–proline 527, lysine 528–leucine 562, asparagine 563–proline 597, aspartate 598–proline 632, threonine 633–lysine 662, aspartate 664–leucine 698, aspartate 699–proline 733, glutamate 734–leucine 768, and aspartate 769–aspartate 803.

This sequence belongs to the PPR family. P subfamily.

It is found in the mitochondrion. This is Pentatricopeptide repeat-containing protein At5g12100, mitochondrial from Arabidopsis thaliana (Mouse-ear cress).